The primary structure comprises 356 residues: MDATYVGAYGRLKVYEVDFLKKDFLEHLISLDKPSDFSSVLYASVYKEDYDALTSIYREPDLTEMAINRHLVRMNRIAAFAIPPLAKNALTAYISKWDIENIKTVISSKFLGHGLKETEMFIVSFRDIPMGLIGGVLTNEDYRNMMNLPNVEAIINYLTRYGYGSYMLQFIEDYRKTGDISPMLYSLDRYYYARLLESLKYYNGDEGPVINYIRSDIDRINLNTILKGKKLNISYERFFSGLVDGGNIPINAIHDFYGNSDILSMIDSIKRYYDLEDAKNKYASDGNLYHFDVSMRNIMITKYMGTMSMLPLSLDSIFYFIIRAEIERQNLRTIYEAKLHGAPKESIYDLMINGVV.

The protein belongs to the V-ATPase V0D/AC39 subunit family. Has multiple subunits with at least A(3), B(3), C, D, E, F, H, I and proteolipid K(x).

The protein localises to the cell membrane. Functionally, component of the A-type ATP synthase that produces ATP from ADP in the presence of a proton gradient across the membrane. This chain is A-type ATP synthase subunit C, found in Thermoplasma volcanium (strain ATCC 51530 / DSM 4299 / JCM 9571 / NBRC 15438 / GSS1).